The sequence spans 160 residues: Protein Vago (160 aa).

The signal sequence occupies residues 1–23 (MESISSMIYLVAMMSLIIGGSQA).

As to expression, expressed in fat body.

The protein resides in the secreted. Functionally, probably involved in the antiviral immune response. May have a role in controlling viral load in the adult fat body, after infection with viruses such as the Drosophila C virus. In Drosophila melanogaster (Fruit fly), this protein is Protein Vago.